Here is a 31-residue protein sequence, read N- to C-terminus: MEALVYTFLLIGTLGIIFFAIFFREPPRMVK.

The chain crosses the membrane as a helical span at residues 3–23 (ALVYTFLLIGTLGIIFFAIFF).

This sequence belongs to the PsbT family. In terms of assembly, PSII is composed of 1 copy each of membrane proteins PsbA, PsbB, PsbC, PsbD, PsbE, PsbF, PsbH, PsbI, PsbJ, PsbK, PsbL, PsbM, PsbT, PsbY, PsbZ, Psb30/Ycf12, at least 3 peripheral proteins of the oxygen-evolving complex and a large number of cofactors. It forms dimeric complexes.

It localises to the plastid. Its subcellular location is the chloroplast thylakoid membrane. Functionally, found at the monomer-monomer interface of the photosystem II (PS II) dimer, plays a role in assembly and dimerization of PSII. PSII is a light-driven water plastoquinone oxidoreductase, using light energy to abstract electrons from H(2)O, generating a proton gradient subsequently used for ATP formation. The sequence is that of Photosystem II reaction center protein T from Tetradesmus obliquus (Green alga).